The chain runs to 183 residues: Bifunctional protein PyrR (183 aa).

Residues 46–47, Arg87, 107–115, Arg140, and Val164 each bind substrate; these read TR and DDVIFSGRT. A PRPP-binding motif is present at residues 103 to 115; it reads VVLVDDVIFSGRT.

This sequence belongs to the purine/pyrimidine phosphoribosyltransferase family. PyrR subfamily.

The enzyme catalyses UMP + diphosphate = 5-phospho-alpha-D-ribose 1-diphosphate + uracil. In terms of biological role, regulates the transcription of the pyrimidine nucleotide (pyr) operon in response to exogenous pyrimidines. Also displays a weak uracil phosphoribosyltransferase activity which is not physiologically significant. The protein is Bifunctional protein PyrR of Thermosynechococcus vestitus (strain NIES-2133 / IAM M-273 / BP-1).